The chain runs to 339 residues: Fructose-1,6-bisphosphatase class 1 (339 aa).

4 residues coordinate Mg(2+): Glu-92, Asp-114, Leu-116, and Asp-117. Substrate-binding positions include 117–120, Asn-209, and Lys-275; that span reads DGSS. Glu-281 lines the Mg(2+) pocket.

Belongs to the FBPase class 1 family. In terms of assembly, homotetramer. The cofactor is Mg(2+).

The protein resides in the cytoplasm. The enzyme catalyses beta-D-fructose 1,6-bisphosphate + H2O = beta-D-fructose 6-phosphate + phosphate. Its pathway is carbohydrate biosynthesis; gluconeogenesis. This Acidithiobacillus ferrooxidans (strain ATCC 53993 / BNL-5-31) (Leptospirillum ferrooxidans (ATCC 53993)) protein is Fructose-1,6-bisphosphatase class 1.